Here is a 148-residue protein sequence, read N- to C-terminus: Large ribosomal subunit protein bL9 (148 aa).

The protein belongs to the bacterial ribosomal protein bL9 family.

Its function is as follows. Binds to the 23S rRNA. The sequence is that of Large ribosomal subunit protein bL9 from Bacillus cereus (strain G9842).